Consider the following 587-residue polypeptide: Glutathione hydrolase proenzyme (587 aa).

An N-terminal signal peptide occupies residues 1 to 28 (MKRTWNVCLTALLSVLLVAGSVPFHAEA). A propeptide spanning residues 29-35 (KKPPKSY) is cleaved from the precursor. Residue arginine 113 participates in L-glutamate binding. The Nucleophile role is filled by threonine 403. Residues threonine 421, glutamate 423, glutamate 442, aspartate 445, 464-465 (SS), and 485-486 (GG) each bind L-glutamate.

The protein belongs to the gamma-glutamyltransferase family. As to quaternary structure, this enzyme consists of two polypeptide chains, which are synthesized in precursor form from a single polypeptide. Cleaved by autocatalysis into a large and small subunit.

Its subcellular location is the secreted. It catalyses the reaction an N-terminal (5-L-glutamyl)-[peptide] + an alpha-amino acid = 5-L-glutamyl amino acid + an N-terminal L-alpha-aminoacyl-[peptide]. It carries out the reaction glutathione + H2O = L-cysteinylglycine + L-glutamate. The enzyme catalyses an S-substituted glutathione + H2O = an S-substituted L-cysteinylglycine + L-glutamate. It functions in the pathway sulfur metabolism; glutathione metabolism. Inhibited by glucose. Functionally, cleaves the gamma-glutamyl bond of extracellular glutathione (gamma-Glu-Cys-Gly), glutathione conjugates, and other gamma-glutamyl compounds. The metabolism of glutathione releases free glutamate and the dipeptide cysteinyl-glycine, which is hydrolyzed to cysteine and glycine by dipeptidases. Uses glutamine as a gamma-glutamyl donor and acceptor for gamma-polyglutamic acid synthesis. Dipeptides are better gamma-glutamyl acceptors than free amino acids. The protein is Glutathione hydrolase proenzyme (ggt) of Bacillus subtilis subsp. natto.